The sequence spans 231 residues: Putative histone H1.9 (231 aa).

Positions 113–177 (QKPSTSKVIL…GSAGSFTLGK (65 aa)) constitute an H15 domain. Serine 135 bears the Phosphoserine mark. The disordered stretch occupies residues 177 to 214 (KKQASKSKLKVKRQRQQRWRSGQRPFGQHRSLLGSKQG). Positions 179 to 194 (QASKSKLKVKRQRQQR) are enriched in basic residues.

Belongs to the histone H1/H5 family. Expressed exclusively in the testis.

It is found in the nucleus. The protein localises to the chromosome. DNA-binding protein that may be implicated in chromatin remodeling and/or transcriptional regulation during spermiogenesis, the process of spermatid maturation into spermatozoa. This chain is Putative histone H1.9, found in Homo sapiens (Human).